Reading from the N-terminus, the 798-residue chain is Penicillin-binding protein 1A (798 aa).

The Cytoplasmic segment spans residues Ile-2 to Cys-9. A helical; Signal-anchor for type II membrane protein membrane pass occupies residues Phe-10 to Val-30. The Periplasmic portion of the chain corresponds to Thr-31–Phe-798. Residues Leu-50–Glu-218 are transglycosylase. Glu-88 (proton donor; for transglycosylase activity) is an active-site residue. Positions Arg-378–Asp-700 are transpeptidase. Ser-461 acts as the Acyl-ester intermediate; for transpeptidase activity in catalysis. The disordered stretch occupies residues Leu-739–Phe-798. The segment covering Gln-766–Val-777 has biased composition (basic and acidic residues). The segment covering Leu-783–Phe-798 has biased composition (polar residues).

This sequence in the N-terminal section; belongs to the glycosyltransferase 51 family. In the C-terminal section; belongs to the transpeptidase family.

The protein localises to the cell inner membrane. The catalysed reaction is [GlcNAc-(1-&gt;4)-Mur2Ac(oyl-L-Ala-gamma-D-Glu-L-Lys-D-Ala-D-Ala)](n)-di-trans,octa-cis-undecaprenyl diphosphate + beta-D-GlcNAc-(1-&gt;4)-Mur2Ac(oyl-L-Ala-gamma-D-Glu-L-Lys-D-Ala-D-Ala)-di-trans,octa-cis-undecaprenyl diphosphate = [GlcNAc-(1-&gt;4)-Mur2Ac(oyl-L-Ala-gamma-D-Glu-L-Lys-D-Ala-D-Ala)](n+1)-di-trans,octa-cis-undecaprenyl diphosphate + di-trans,octa-cis-undecaprenyl diphosphate + H(+). It catalyses the reaction Preferential cleavage: (Ac)2-L-Lys-D-Ala-|-D-Ala. Also transpeptidation of peptidyl-alanyl moieties that are N-acyl substituents of D-alanine.. It participates in cell wall biogenesis; peptidoglycan biosynthesis. In terms of biological role, cell wall formation. Synthesis of cross-linked peptidoglycan from the lipid intermediates. The enzyme has a penicillin-insensitive transglycosylase N-terminal domain (formation of linear glycan strands) and a penicillin-sensitive transpeptidase C-terminal domain (cross-linking of the peptide subunits). Essential for cell wall synthesis. This chain is Penicillin-binding protein 1A (mrcA), found in Neisseria gonorrhoeae (strain ATCC 700825 / FA 1090).